A 185-amino-acid chain; its full sequence is HTH-type transcriptional regulator Hpr (185 aa).

An HTH marR-type domain is found at 13–157; it reads AMIFSQRIAQ…LIAILRNIYG (145 aa). The segment at residues 63–86 is a DNA-binding region (H-T-H motif); that stretch reads ISEIAKFGVMHVSTAFNFSKKLEE.

In terms of assembly, homodimer.

In terms of biological role, negative regulator of protease production and sporulation. This chain is HTH-type transcriptional regulator Hpr, found in Bacillus mycoides (strain KBAB4) (Bacillus weihenstephanensis).